We begin with the raw amino-acid sequence, 273 residues long: Testis-specific serine/threonine-protein kinase 6 (273 aa).

The 256-residue stretch at 12–267 (YKLGRTIGEG…AGQVARNCWL (256 aa)) folds into the Protein kinase domain. ATP-binding positions include 18-26 (IGEGSYSKV) and lysine 41. Aspartate 135 serves as the catalytic Proton acceptor.

This sequence belongs to the protein kinase superfamily. CAMK Ser/Thr protein kinase family. Microtubule inner protein component of sperm flagellar doublet microtubules. Interacts with HSP90; this interaction stabilizes and activates TSSK6. Interacts with the heat shock proteins HSPCB, HSPA8 and HSPA1A. These interactions appear to be required for TSSK6 kinase activity. Interacts with TSACC; this interaction is direct and recruits TSACC to HSP90, which is essential for kinase activity. Mg(2+) serves as cofactor. In terms of processing, autophosphorylated. Ubiquitinated; HSP90 activity negatively regulates ubiquitination and degradation. As to expression, highly expressed in testis. Expressed at lower levels in colon, small intestine, ovary, prostate, thymus, spleen and peripheral blood leukocytes.

The protein localises to the cytoplasm. It localises to the cytoskeleton. The protein resides in the flagellum axoneme. It is found in the nucleus. The catalysed reaction is L-seryl-[protein] + ATP = O-phospho-L-seryl-[protein] + ADP + H(+). The enzyme catalyses L-threonyl-[protein] + ATP = O-phospho-L-threonyl-[protein] + ADP + H(+). Functionally, serine/threonine-protein kinase component of the sperm flagellar doublet microtubules. May act as a regulator of sperm motility by mediating phosphorylation of sperm doublet microtubule proteins. Plays a role in DNA condensation during postmeiotic chromatin remodeling and histone-to-protamine transition during spermatogenesis. The polypeptide is Testis-specific serine/threonine-protein kinase 6 (Homo sapiens (Human)).